Reading from the N-terminus, the 548-residue chain is Membrane protein insertase YidC (548 aa).

The next 5 helical transmembrane spans lie at 6 to 26, 349 to 369, 424 to 444, 455 to 475, and 503 to 523; these read NLIL…WESD, TVFQ…TLLV, LGGC…YWAL, FALW…PILM, and PIIF…YWLV.

The protein belongs to the OXA1/ALB3/YidC family. Type 1 subfamily. Interacts with the Sec translocase complex via SecD. Specifically interacts with transmembrane segments of nascent integral membrane proteins during membrane integration.

It is found in the cell inner membrane. Its function is as follows. Required for the insertion and/or proper folding and/or complex formation of integral membrane proteins into the membrane. Involved in integration of membrane proteins that insert both dependently and independently of the Sec translocase complex, as well as at least some lipoproteins. Aids folding of multispanning membrane proteins. In Aeromonas salmonicida (strain A449), this protein is Membrane protein insertase YidC.